A 654-amino-acid chain; its full sequence is Fructose-1,6-bisphosphatase class 3 (654 aa).

Belongs to the FBPase class 3 family. The cofactor is Mn(2+).

It catalyses the reaction beta-D-fructose 1,6-bisphosphate + H2O = beta-D-fructose 6-phosphate + phosphate. The protein operates within carbohydrate biosynthesis; gluconeogenesis. This is Fructose-1,6-bisphosphatase class 3 from Staphylococcus haemolyticus (strain JCSC1435).